The sequence spans 293 residues: ATP synthase gamma chain (293 aa).

The protein belongs to the ATPase gamma chain family. F-type ATPases have 2 components, CF(1) - the catalytic core - and CF(0) - the membrane proton channel. CF(1) has five subunits: alpha(3), beta(3), gamma(1), delta(1), epsilon(1). CF(0) has three main subunits: a, b and c.

It localises to the cell membrane. In terms of biological role, produces ATP from ADP in the presence of a proton gradient across the membrane. The gamma chain is believed to be important in regulating ATPase activity and the flow of protons through the CF(0) complex. This Methylacidiphilum infernorum (isolate V4) (Methylokorus infernorum (strain V4)) protein is ATP synthase gamma chain.